The primary structure comprises 725 residues: Homeobox protein unc-62 (725 aa).

An MEIS N-terminal domain is found at 133-218 (SSDVCSSASF…PLDIVGDERA (86 aa)). 6 disordered regions span residues 214–258 (GDER…PYEP), 295–317 (SSSSSQPQPGDHPLANGGTLHST), 329–359 (VSSPSTCSSGGLRQDSTPLSGETPMANGNSM), 386–419 (SLHQHHLHHPHHFPHHQLQPPAHHQDFLLPPPPQ), 491–555 (VKME…KRKV), and 615–661 (IDQN…PDPT). Residues 219-239 (SSSQPPMSPGSMGHHGHSGSP) are compositionally biased toward low complexity. Residues 388–400 (HQHHLHHPHHFPH) are compositionally biased toward basic residues. The segment covering 498-508 (SVSSSKSGGKK) has biased composition (low complexity). A compositionally biased stretch (polar residues) spans 541–550 (LSDSANGSQN). The segment at residues 552 to 614 (KRKVPKVFSK…NARRRIVQPM (63 aa)) is a DNA-binding region (homeobox; TALE-type).

This sequence belongs to the TALE/MEIS homeobox family.

It is found in the nucleus. In terms of biological role, acts redundantly with ceh-20 and ceh-40 to perform overlapping roles during embryogenesis. Required for postembryonic development of the ectoderm, including the Q, V and P cell lineages, playing a crucial role in ensuring that these cells and their descendants undergo their invariant patterns of cell division, migration, fusion and morphogenesis. Has a role in the mig-13 pathway to promote anterior migration of neuroblasts in the Q lineage. Required for multiple roles in regulating vulva development. This is Homeobox protein unc-62 (unc-62) from Caenorhabditis briggsae.